The sequence spans 348 residues: tRNA N6-adenosine threonylcarbamoyltransferase (348 aa).

Fe cation-binding residues include His-111 and His-115. Residues 134–138 (LVSGG), Asp-167, Gly-180, and Asn-276 contribute to the substrate site. Residue Asp-304 participates in Fe cation binding.

This sequence belongs to the KAE1 / TsaD family. Fe(2+) serves as cofactor.

It localises to the cytoplasm. The enzyme catalyses L-threonylcarbamoyladenylate + adenosine(37) in tRNA = N(6)-L-threonylcarbamoyladenosine(37) in tRNA + AMP + H(+). In terms of biological role, required for the formation of a threonylcarbamoyl group on adenosine at position 37 (t(6)A37) in tRNAs that read codons beginning with adenine. Is involved in the transfer of the threonylcarbamoyl moiety of threonylcarbamoyl-AMP (TC-AMP) to the N6 group of A37, together with TsaE and TsaB. TsaD likely plays a direct catalytic role in this reaction. In Bordetella petrii (strain ATCC BAA-461 / DSM 12804 / CCUG 43448), this protein is tRNA N6-adenosine threonylcarbamoyltransferase.